The sequence spans 105 residues: Cell division protein FtsB (105 aa).

The Cytoplasmic segment spans residues 1–3 (MRI). The chain crosses the membrane as a helical span at residues 4–21 (VIYSMLVLLIAIQYPLWL). Over 22 to 105 (GKGGWLKVYE…DTAKASTVKQ (84 aa)) the chain is Periplasmic. Residues 32–60 (MEKQVELQEAKNSLLALRNAKLEGDVKDL) adopt a coiled-coil conformation.

It belongs to the FtsB family. In terms of assembly, part of a complex composed of FtsB, FtsL and FtsQ.

It localises to the cell inner membrane. In terms of biological role, essential cell division protein. May link together the upstream cell division proteins, which are predominantly cytoplasmic, with the downstream cell division proteins, which are predominantly periplasmic. The protein is Cell division protein FtsB of Polynucleobacter asymbioticus (strain DSM 18221 / CIP 109841 / QLW-P1DMWA-1) (Polynucleobacter necessarius subsp. asymbioticus).